The chain runs to 424 residues: UDP-N-acetylglucosamine 1-carboxyvinyltransferase (424 aa).

Position 22-23 (22-23) interacts with phosphoenolpyruvate; sequence KN. Arg-96 lines the UDP-N-acetyl-alpha-D-glucosamine pocket. The active-site Proton donor is Cys-120. Cys-120 is modified (2-(S-cysteinyl)pyruvic acid O-phosphothioketal). UDP-N-acetyl-alpha-D-glucosamine is bound by residues 125-129, Asp-312, and Ile-334; that span reads RPVDQ.

It belongs to the EPSP synthase family. MurA subfamily.

It localises to the cytoplasm. It carries out the reaction phosphoenolpyruvate + UDP-N-acetyl-alpha-D-glucosamine = UDP-N-acetyl-3-O-(1-carboxyvinyl)-alpha-D-glucosamine + phosphate. Its pathway is cell wall biogenesis; peptidoglycan biosynthesis. Its function is as follows. Cell wall formation. Adds enolpyruvyl to UDP-N-acetylglucosamine. The chain is UDP-N-acetylglucosamine 1-carboxyvinyltransferase from Polynucleobacter asymbioticus (strain DSM 18221 / CIP 109841 / QLW-P1DMWA-1) (Polynucleobacter necessarius subsp. asymbioticus).